The primary structure comprises 355 residues: Protein RecA (355 aa).

67 to 74 (GPESSGKT) is a binding site for ATP.

Belongs to the RecA family.

It localises to the cytoplasm. In terms of biological role, can catalyze the hydrolysis of ATP in the presence of single-stranded DNA, the ATP-dependent uptake of single-stranded DNA by duplex DNA, and the ATP-dependent hybridization of homologous single-stranded DNAs. It interacts with LexA causing its activation and leading to its autocatalytic cleavage. The chain is Protein RecA from Shewanella amazonensis (strain ATCC BAA-1098 / SB2B).